Consider the following 212-residue polypeptide: Riboflavin kinase (212 aa).

The segment at 1-83 (MTELYCERKT…NLLRYFDIAS (83 aa)) is unknown. The segment at 84–212 (IKLVGRVVTG…GDRVELEVYL (129 aa)) is riboflavin kinase. A CDP-binding site is contributed by 93–98 (GLGEGA). Mg(2+)-binding residues include threonine 122 and asparagine 124. Residues threonine 179 and glutamate 187 each contribute to the FMN site. Residue 192–195 (VRVR) coordinates CDP.

It belongs to the archaeal riboflavin kinase family. Mg(2+) is required as a cofactor.

It catalyses the reaction riboflavin + CTP = CDP + FMN + H(+). It participates in cofactor biosynthesis; FMN biosynthesis; FMN from riboflavin (CTP route): step 1/1. Functionally, catalyzes the CTP-dependent phosphorylation of riboflavin (vitamin B2) to form flavin mononucleotide (FMN). The protein is Riboflavin kinase (ribK) of Pyrobaculum calidifontis (strain DSM 21063 / JCM 11548 / VA1).